The sequence spans 187 residues: Elongation factor P (187 aa).

The protein belongs to the elongation factor P family.

Its subcellular location is the cytoplasm. Its pathway is protein biosynthesis; polypeptide chain elongation. Involved in peptide bond synthesis. Stimulates efficient translation and peptide-bond synthesis on native or reconstituted 70S ribosomes in vitro. Probably functions indirectly by altering the affinity of the ribosome for aminoacyl-tRNA, thus increasing their reactivity as acceptors for peptidyl transferase. This Rhodococcus jostii (strain RHA1) protein is Elongation factor P.